The chain runs to 197 residues: Holliday junction resolvase RecU (197 aa).

Residues 1–21 (MVNYPSGVRAGGYPQKKKNQN) form a disordered region. Mg(2+) contacts are provided by threonine 82, aspartate 84, aspartate 97, and glutamine 116.

The protein belongs to the RecU family. It depends on Mg(2+) as a cofactor.

The protein localises to the cytoplasm. The catalysed reaction is Endonucleolytic cleavage at a junction such as a reciprocal single-stranded crossover between two homologous DNA duplexes (Holliday junction).. In terms of biological role, endonuclease that resolves Holliday junction intermediates in genetic recombination. Cleaves mobile four-strand junctions by introducing symmetrical nicks in paired strands. Promotes annealing of linear ssDNA with homologous dsDNA. Required for DNA repair, homologous recombination and chromosome segregation. The protein is Holliday junction resolvase RecU of Oenococcus oeni (strain ATCC BAA-331 / PSU-1).